A 305-amino-acid polypeptide reads, in one-letter code: tRNA dimethylallyltransferase (305 aa).

Glycine 14 to threonine 21 is an ATP binding site. Residue threonine 16–threonine 21 coordinates substrate. 3 interaction with substrate tRNA regions span residues aspartate 39–leucine 42, glutamine 163–arginine 167, and arginine 243–arginine 248.

Belongs to the IPP transferase family. As to quaternary structure, monomer. Requires Mg(2+) as cofactor.

The catalysed reaction is adenosine(37) in tRNA + dimethylallyl diphosphate = N(6)-dimethylallyladenosine(37) in tRNA + diphosphate. Catalyzes the transfer of a dimethylallyl group onto the adenine at position 37 in tRNAs that read codons beginning with uridine, leading to the formation of N6-(dimethylallyl)adenosine (i(6)A). The polypeptide is tRNA dimethylallyltransferase (Ruthia magnifica subsp. Calyptogena magnifica).